Here is a 255-residue protein sequence, read N- to C-terminus: tRNA pseudouridine synthase B (255 aa).

D52 acts as the Nucleophile in catalysis. Substrate-binding residues include Y80, Y183, and L204.

The protein belongs to the pseudouridine synthase TruB family. Type 1 subfamily.

The catalysed reaction is uridine(55) in tRNA = pseudouridine(55) in tRNA. Functionally, responsible for synthesis of pseudouridine from uracil-55 in the psi GC loop of transfer RNAs. This Blochmanniella floridana protein is tRNA pseudouridine synthase B.